Reading from the N-terminus, the 186-residue chain is MKIFFITSNPGKVREVANFLGTFGIEIVQLKHEYPEIQAEKLEDVVDFGISWLKGKVPEPFMIEDSGLFIESLKGFPGVYSSYVYRTIGLEGILKLMEGAEDRRAYFKSVIGFYIDGKAYKFSGVTWGRISNEKRGTHGFGYDPIFIPEGSEKTFAEMTIEEKNALSHRGKALKAFFEWLKVNLKY.

Residue 7–12 (TSNPGK) participates in substrate binding. Residues E36 and D65 each coordinate Mg(2+). Residue D65 is the Proton acceptor of the active site. Substrate contacts are provided by residues S66, 140 to 143 (FGYD), K163, and 168 to 169 (HR).

Belongs to the HAM1 NTPase family. As to quaternary structure, homodimer. The cofactor is Mg(2+). It depends on Mn(2+) as a cofactor.

It catalyses the reaction XTP + H2O = XMP + diphosphate + H(+). The catalysed reaction is dITP + H2O = dIMP + diphosphate + H(+). It carries out the reaction ITP + H2O = IMP + diphosphate + H(+). Its function is as follows. Pyrophosphatase that catalyzes the hydrolysis of nucleoside triphosphates to their monophosphate derivatives, with a high preference for the non-canonical purine nucleotides XTP (xanthosine triphosphate), dITP (deoxyinosine triphosphate) and ITP. Seems to function as a house-cleaning enzyme that removes non-canonical purine nucleotides from the nucleotide pool, thus preventing their incorporation into DNA/RNA and avoiding chromosomal lesions. This Pyrococcus horikoshii (strain ATCC 700860 / DSM 12428 / JCM 9974 / NBRC 100139 / OT-3) protein is dITP/XTP pyrophosphatase.